The primary structure comprises 896 residues: Glutamate receptor 2.4 (896 aa).

A signal peptide spans 1 to 24 (MKRHLNDVVLVFLVFIFGVKLGKG). The Extracellular portion of the chain corresponds to 25–565 (QNTTIQVINV…SSLIFFKPLT (541 aa)). Asparagine 26, asparagine 46, asparagine 53, asparagine 204, asparagine 267, asparagine 331, asparagine 341, and asparagine 527 each carry an N-linked (GlcNAc...) asparagine glycan. The helical transmembrane segment at 566–586 (PGLWGMTLGSFFVVGFVVWIL) threads the bilayer. The Cytoplasmic segment spans residues 587 to 595 (EHRVNSEFT). The helical transmembrane segment at 596–616 (GPPQYQISTMFWFAFSIMVFA) threads the bilayer. At 617–620 (PRER) the chain is on the cytoplasmic side. A helical membrane pass occupies residues 621–641 (VMSFTARVVVITWYFIVLVLT). At 642 to 815 (QSYTASLSSL…VSFRKLSLDS (174 aa)) the chain is on the extracellular side. The chain crosses the membrane as a helical span at residues 816 to 836 (FLLLFVAAATVCTLALLKFVI). Residues 837-896 (CFLIQNRIILNDEFYRGKRMKEMWLKFMESDGESYISRVRSTCPQVLIQPREEDIDPING) are Cytoplasmic-facing.

It belongs to the glutamate-gated ion channel (TC 1.A.10.1) family. May form heteromers. As to expression, expressed predominantly in roots.

It localises to the membrane. Its function is as follows. Glutamate-gated receptor that probably acts as a non-selective cation channel. May be involved in light-signal transduction and calcium homeostasis via the regulation of calcium influx into cells. The protein is Glutamate receptor 2.4 (GLR2.4) of Arabidopsis thaliana (Mouse-ear cress).